A 122-amino-acid polypeptide reads, in one-letter code: Anti-sigma-F factor antagonist RsfB (122 aa).

An STAS domain is found at 7-115 (ITVTVADHNG…STLHDALTGV (109 aa)). S61 carries the post-translational modification Phosphoserine.

The protein belongs to the anti-sigma-factor antagonist family. In terms of assembly, interacts with anti-sigma-F factor RsbW (UsfX). Its phosphorylation may prevent this interaction. In terms of processing, putative phosphorylation on Ser-61 may prevent interaction with RsbW.

Its function is as follows. Positive regulator of sigma-F (SigF) activity. Binds to anti-sigma-F factor RsbW (UsfX) preventing its binding to SigF, thus activating transcription. The chain is Anti-sigma-F factor antagonist RsfB (rsfB) from Mycobacterium tuberculosis (strain CDC 1551 / Oshkosh).